The primary structure comprises 715 residues: MLSLLTRPFLPIFCFLYGPQSEGSTRIQCLRRFVTFLLGLVLGFLLWKLAALNFTLGRLFVNGATDLYVFIIFVLVTGTIFMLSLPVRAVILLIFVALVGKSGRTYLRAVAFAFIISGPIANLVENAGEVARVFVCTTVLTYNLSKTRFDLMAKPFTNTLKHMRGDVEEIRHTFYELQEVLVDLKYAVENSDIEDEKYGDKNTKPIYERWGRETSRMNVSEIGNGGKELPTPAAVQERFQRNMRNRCKHQLRSGHRACLEVFRNGYRKCTTNFPSMIAKAICWPYRVDIICELDLFGNPDKICDPSAVVPQNFGETYVELLKAEKKLFDNSSQIVVNYEIKDEQFAKSQLKSAERTGQAFKEDFERQKRIFNKVMGILQKILCLFMLRMVYVSINYYVKYLNDVEFDNFYITKYFKHVDQRRKEQRIDAILPLRTYEKSKYIDVDHIFSRTHHESTTVCFNLLQFLLELVTAGLFILIDHLVVELLQIVRKRSKIVYQQDGEHEVRFNISGVGQMARLLRTTMHNFNIHEKVSTSLSNKECLPNAHVLPKKMYYQLILLYLIIIVLIYQSTTFLRMRRVICSFFYYKREKQRILFLYNRILRNRLRSLEFLIHDAEDNLATHRIQQQVNVFLWLRFSCPVAFGWIRHFKFAKRTCMICRGLEDSTFTVCGNCGLPYCDDCAEDLNSVCFQCGVVLTRGAEGSESSVEVYTYRKEK.

At 1 to 32 (MLSLLTRPFLPIFCFLYGPQSEGSTRIQCLRR) the chain is on the cytoplasmic side. Residues 33-53 (FVTFLLGLVLGFLLWKLAALN) form a helical membrane-spanning segment. Over 54–66 (FTLGRLFVNGATD) the chain is Extracellular. The helical transmembrane segment at 67 to 87 (LYVFIIFVLVTGTIFMLSLPV) threads the bilayer. Topologically, residues 88 to 109 (RAVILLIFVALVGKSGRTYLRA) are cytoplasmic. A helical membrane pass occupies residues 110 to 130 (VAFAFIISGPIANLVENAGEV). Residues 131–373 (ARVFVCTTVL…FERQKRIFNK (243 aa)) are Extracellular-facing. A helical membrane pass occupies residues 374–394 (VMGILQKILCLFMLRMVYVSI). Over 395–457 (NYYVKYLNDV…FSRTHHESTT (63 aa)) the chain is Cytoplasmic. A helical transmembrane segment spans residues 458–478 (VCFNLLQFLLELVTAGLFILI). Residues 479-553 (DHLVVELLQI…NAHVLPKKMY (75 aa)) are Extracellular-facing. Residues 554 to 574 (YQLILLYLIIIVLIYQSTTFL) form a helical membrane-spanning segment. Over 575–715 (RMRRVICSFF…VEVYTYRKEK (141 aa)) the chain is Cytoplasmic. An RING-type; degenerate zinc finger spans residues 655–691 (CMICRGLEDSTFTVCGNCGLPYCDDCAEDLNSVCFQC).

In terms of tissue distribution, specifically expressed in testis.

It localises to the cytoplasmic vesicle. It is found in the secretory vesicle. The protein localises to the acrosome membrane. The protein resides in the cytoplasm. Its subcellular location is the cytoplasmic vesicle membrane. Component of the sperm acrosome membrane. Required for breakdown of the sperm plasma membrane after sperm entry into the egg, which is an essential prerequisite for successful fertilization. The protein is Protein sneaky of Drosophila melanogaster (Fruit fly).